The chain runs to 682 residues: Glutamine--fructose-6-phosphate aminotransferase [isomerizing] 2 (682 aa).

Cys2 (for GATase activity) is an active-site residue. Residues 2 to 288 (CGIFAYMNYR…DDDIAAVADG (287 aa)) enclose the Glutamine amidotransferase type-2 domain. Ser244 carries the phosphoserine modification. SIS domains are found at residues 360 to 499 (HLKE…DRIS) and 531 to 672 (LALE…VDFP). Substrate is bound by residues 377 to 378 (TS), 422 to 424 (SQS), Thr427, and His578.

It catalyses the reaction D-fructose 6-phosphate + L-glutamine = D-glucosamine 6-phosphate + L-glutamate. Its pathway is nucleotide-sugar biosynthesis; UDP-N-acetyl-alpha-D-glucosamine biosynthesis; alpha-D-glucosamine 6-phosphate from D-fructose 6-phosphate: step 1/1. In terms of biological role, controls the flux of glucose into the hexosamine pathway. Most likely involved in regulating the availability of precursors for N- and O-linked glycosylation of proteins. This is Glutamine--fructose-6-phosphate aminotransferase [isomerizing] 2 (Gfpt2) from Mus musculus (Mouse).